The sequence spans 838 residues: U1 SNP1-associating protein 1 (838 aa).

The Cytoplasmic segment spans residues 1–536 (MSEYLAQTPC…VRPLRNSFPL (536 aa)). Positions 31–240 (HPLSTVGRLL…DFAPAHNSFF (210 aa)) are required for ERAD-L function. In terms of domain architecture, Ubiquitin-like spans 259–318 (ERFVLEFISDATLSITQMNVKPDTTVKQVKDFICSVYTHSLNLRRNDIKLIYKGQLLHEN). The tract at residues 319–418 (NFAGNSSKIS…VPTDELYRKC (100 aa)) is important for HRD1 oligomer formation. Residues 345–535 (QEYTESGPGF…VVRPLRNSFP (191 aa)) are interaction with HRD1. Residues S374, S376, and S379 each carry the phosphoserine modification. The required for ERAD-L function and HRD1 oligomer formation stretch occupies residues 437-490 (SSYLSVIKGDYGEIKIPISSNDYRINGDNILLSPSAIEQLESALNFKIERPRDS). The helical transmembrane segment at 537-559 (LLVLIRTFYLIGYNSLVPFFIIL) threads the bilayer. Residues 560–563 (EFGS) lie on the Extracellular side of the membrane. Residues 564-583 (FLPWKYIILLSLLFIFRTVW) form a helical membrane-spanning segment. The Cytoplasmic portion of the chain corresponds to 584 to 838 (NTQEVWNLWR…QPHLYIPDED (255 aa)). Residues 584 to 838 (NTQEVWNLWR…QPHLYIPDED (255 aa)) are interaction with DER1. Positions 795–838 (ARDREQPAPSAQQQENEDEALIIPDEEEPTATGAQPHLYIPDED) are disordered. Residues 809 to 823 (ENEDEALIIPDEEEP) show a composition bias toward acidic residues.

As to quaternary structure, component of the HRD1 ubiquitin ligase complex which contains the E3 ligase HRD1, its cofactors HRD3, USA1 and DER1, substrate recruiting factor YOS9 and CDC48-binding protein UBX2. Within the complex, interacts directly with HRD1 (via N-terminus) and DER1 (via C-terminus) and indirectly with HRD3. In ERAD-L, HRD3 and YOS9 jointly bind misfolded glycoproteins in the endoplasmic reticulum (ER) lumen. Movement of ERAD-L substrates through the ER membrane is facilitated by HRD1 and DER1 which have lateral gates facing each other and which distort the membrane region between the lateral gates, making it much thinner than a normal phospholipid bilayer. Substrates insert into the membrane as a hairpin loop with one strand interacting with DER1 and the other with HRD1. The HRD1 complex interacts with the heterotrimeric CDC48-NPL4-UFD1 ATPase complex which is recruited by UBX2 via its interaction with CDC48 and which moves ubiquitinated substrates to the cytosol for targeting to the proteasome.

It is found in the endoplasmic reticulum membrane. Functionally, scaffold protein of the endoplasmic reticulum-associated degradation (ERAD) (also known as endoplasmic reticulum quality control, ERQC) pathway involved in ubiquitin-dependent degradation of misfolded endoplasmic reticulum proteins. Component of the HRD1 ubiquitin ligase complex, which is part of the ERAD-L and ERAD-M pathways responsible for the rapid degradation of soluble lumenal and membrane proteins with misfolded lumenal domains (ERAD-L), or ER-membrane proteins with misfolded transmembrane domains (ERAD-M). Has multiple functions in ERAD including recruitment of DER1 to the HRD1 ubiquitin ligase, and regulation of HRD1 activity. Involved in oligomerization of HRD1 and in HRD1 autoubiquitination and degradation. In Saccharomyces cerevisiae (strain ATCC 204508 / S288c) (Baker's yeast), this protein is U1 SNP1-associating protein 1 (USA1).